The sequence spans 316 residues: 4-hydroxy-3-methylbut-2-enyl diphosphate reductase (316 aa).

Cysteine 12 lines the [4Fe-4S] cluster pocket. Positions 41 and 74 each coordinate (2E)-4-hydroxy-3-methylbut-2-enyl diphosphate. Residues histidine 41 and histidine 74 each coordinate dimethylallyl diphosphate. Isopentenyl diphosphate-binding residues include histidine 41 and histidine 74. [4Fe-4S] cluster is bound at residue cysteine 96. Histidine 124 is a binding site for (2E)-4-hydroxy-3-methylbut-2-enyl diphosphate. Position 124 (histidine 124) interacts with dimethylallyl diphosphate. Position 124 (histidine 124) interacts with isopentenyl diphosphate. Glutamate 126 (proton donor) is an active-site residue. Threonine 167 provides a ligand contact to (2E)-4-hydroxy-3-methylbut-2-enyl diphosphate. A [4Fe-4S] cluster-binding site is contributed by cysteine 197. Serine 225, serine 226, asparagine 227, and serine 269 together coordinate (2E)-4-hydroxy-3-methylbut-2-enyl diphosphate. Residues serine 225, serine 226, asparagine 227, and serine 269 each contribute to the dimethylallyl diphosphate site. Positions 225, 226, 227, and 269 each coordinate isopentenyl diphosphate.

This sequence belongs to the IspH family. Homodimer. [4Fe-4S] cluster serves as cofactor.

The catalysed reaction is isopentenyl diphosphate + 2 oxidized [2Fe-2S]-[ferredoxin] + H2O = (2E)-4-hydroxy-3-methylbut-2-enyl diphosphate + 2 reduced [2Fe-2S]-[ferredoxin] + 2 H(+). The enzyme catalyses dimethylallyl diphosphate + 2 oxidized [2Fe-2S]-[ferredoxin] + H2O = (2E)-4-hydroxy-3-methylbut-2-enyl diphosphate + 2 reduced [2Fe-2S]-[ferredoxin] + 2 H(+). It participates in isoprenoid biosynthesis; dimethylallyl diphosphate biosynthesis; dimethylallyl diphosphate from (2E)-4-hydroxy-3-methylbutenyl diphosphate: step 1/1. It functions in the pathway isoprenoid biosynthesis; isopentenyl diphosphate biosynthesis via DXP pathway; isopentenyl diphosphate from 1-deoxy-D-xylulose 5-phosphate: step 6/6. Catalyzes the conversion of 1-hydroxy-2-methyl-2-(E)-butenyl 4-diphosphate (HMBPP) into a mixture of isopentenyl diphosphate (IPP) and dimethylallyl diphosphate (DMAPP). Acts in the terminal step of the DOXP/MEP pathway for isoprenoid precursor biosynthesis. The chain is 4-hydroxy-3-methylbut-2-enyl diphosphate reductase from Salmonella paratyphi A (strain ATCC 9150 / SARB42).